Consider the following 536-residue polypeptide: Formate--tetrahydrofolate ligase (536 aa).

51–58 (TAAGEGKT) contacts ATP.

Belongs to the formate--tetrahydrofolate ligase family.

It catalyses the reaction (6S)-5,6,7,8-tetrahydrofolate + formate + ATP = (6R)-10-formyltetrahydrofolate + ADP + phosphate. It functions in the pathway one-carbon metabolism; tetrahydrofolate interconversion. The protein is Formate--tetrahydrofolate ligase of Thermoplasma volcanium (strain ATCC 51530 / DSM 4299 / JCM 9571 / NBRC 15438 / GSS1).